Here is a 149-residue protein sequence, read N- to C-terminus: Large ribosomal subunit protein bL9 (149 aa).

Belongs to the bacterial ribosomal protein bL9 family.

Binds to the 23S rRNA. This is Large ribosomal subunit protein bL9 from Teredinibacter turnerae (strain ATCC 39867 / T7901).